A 308-amino-acid polypeptide reads, in one-letter code: MENRSLVTIAEHSREKILYMLEMAKQFEKNPNRRLLEGKVVATLFFEPSTRTRLSFETAANRLGARVIGFSDPKATSSSKGETLKDTIMMVSNYADVIVMRHYLEGAARYASEVAPVPIVNAGDGANQHPSQTMLDLYSIYKTQGTLENLNIYLVGDLKYGRTVHSLLMAMRHFNPTFHFIAPEELKMPEEYKIYCKEHNIKYVEHTDFNEEVIKDADILYMTRVQRERFTDLMEYERVKNVYILKAKMLENTRSNLRILHPLPRVNEIAYDVDDSPKAYYFQQAQNGLYARQAILCDVLGITLQDIL.

Carbamoyl phosphate-binding residues include Arg-51 and Thr-52. Lys-80 serves as a coordination point for L-aspartate. Residues Arg-101, His-129, and Gln-132 each coordinate carbamoyl phosphate. 2 residues coordinate L-aspartate: Arg-162 and Arg-224. Carbamoyl phosphate is bound by residues Leu-263 and Pro-264.

This sequence belongs to the aspartate/ornithine carbamoyltransferase superfamily. ATCase family. As to quaternary structure, heterododecamer (2C3:3R2) of six catalytic PyrB chains organized as two trimers (C3), and six regulatory PyrI chains organized as three dimers (R2).

The catalysed reaction is carbamoyl phosphate + L-aspartate = N-carbamoyl-L-aspartate + phosphate + H(+). The protein operates within pyrimidine metabolism; UMP biosynthesis via de novo pathway; (S)-dihydroorotate from bicarbonate: step 2/3. Catalyzes the condensation of carbamoyl phosphate and aspartate to form carbamoyl aspartate and inorganic phosphate, the committed step in the de novo pyrimidine nucleotide biosynthesis pathway. This Bacteroides fragilis (strain ATCC 25285 / DSM 2151 / CCUG 4856 / JCM 11019 / LMG 10263 / NCTC 9343 / Onslow / VPI 2553 / EN-2) protein is Aspartate carbamoyltransferase catalytic subunit.